Here is a 187-residue protein sequence, read N- to C-terminus: Frataxin, mitochondrial (187 aa).

It belongs to the frataxin family. As to quaternary structure, monomer. Oligomer. Interacts with NIFS1.

Its subcellular location is the mitochondrion. It carries out the reaction 4 Fe(2+) + O2 + 4 H(+) = 4 Fe(3+) + 2 H2O. In terms of biological role, promotes the biosynthesis of heme as well as the assembly and repair of iron-sulfur clusters by delivering Fe(2+) to proteins involved in these pathways. May play a role in the protection against iron-catalyzed oxidative stress through its ability to catalyze the oxidation of Fe(2+) to Fe(3+). May be able to store large amounts of the metal in the form of a ferrihydrite mineral by oligomerization. Binds to the mitochondrial cysteine desulfurase NIFS1 and increases its activity. This chain is Frataxin, mitochondrial (FH), found in Arabidopsis thaliana (Mouse-ear cress).